Consider the following 589-residue polypeptide: ATP-dependent lipid A-core flippase (589 aa).

5 helical membrane passes run 29-49 (LLLV…TGFL), 70-90 (WLPV…YITD), 157-177 (VIGA…TILV), 261-281 (MIGA…ALAG), and 283-303 (LTAG…PGLK). Positions 32-314 (VAALIAALIE…LTNVQNMVQR (283 aa)) constitute an ABC transmembrane type-1 domain. The ABC transporter domain occupies 346–582 (IEFRDVTARY…GGLYSHLHGM (237 aa)). An ATP-binding site is contributed by 380 to 387 (GRSGSGKS).

The protein belongs to the ABC transporter superfamily. Lipid exporter (TC 3.A.1.106) family. As to quaternary structure, homodimer.

The protein resides in the cell inner membrane. It carries out the reaction ATP + H2O + lipid A-core oligosaccharideSide 1 = ADP + phosphate + lipid A-core oligosaccharideSide 2.. In terms of biological role, involved in lipopolysaccharide (LPS) biosynthesis. Translocates lipid A-core from the inner to the outer leaflet of the inner membrane. Transmembrane domains (TMD) form a pore in the inner membrane and the ATP-binding domain (NBD) is responsible for energy generation. The sequence is that of ATP-dependent lipid A-core flippase from Xanthomonas axonopodis pv. citri (strain 306).